The chain runs to 367 residues: Anthranilate phosphoribosyltransferase (367 aa).

Positions 1–21 (MALSSESSAASAARRPSGGPA) are enriched in low complexity. The tract at residues 1–24 (MALSSESSAASAARRPSGGPATSW) is disordered. Residues G104, 107-108 (GD), T112, 114-117 (NLST), 132-140 (KHGNRAASS), and G144 each bind 5-phospho-alpha-D-ribose 1-diphosphate. G104 lines the anthranilate pocket. Residue S116 coordinates Mg(2+). Residue N135 participates in anthranilate binding. R190 serves as a coordination point for anthranilate. Residues D248 and E249 each coordinate Mg(2+).

Belongs to the anthranilate phosphoribosyltransferase family. As to quaternary structure, homodimer. The cofactor is Mg(2+).

It catalyses the reaction N-(5-phospho-beta-D-ribosyl)anthranilate + diphosphate = 5-phospho-alpha-D-ribose 1-diphosphate + anthranilate. Its pathway is amino-acid biosynthesis; L-tryptophan biosynthesis; L-tryptophan from chorismate: step 2/5. In terms of biological role, catalyzes the transfer of the phosphoribosyl group of 5-phosphorylribose-1-pyrophosphate (PRPP) to anthranilate to yield N-(5'-phosphoribosyl)-anthranilate (PRA). The protein is Anthranilate phosphoribosyltransferase of Mycolicibacterium paratuberculosis (strain ATCC BAA-968 / K-10) (Mycobacterium paratuberculosis).